Reading from the N-terminus, the 142-residue chain is Large ribosomal subunit protein uL11 (142 aa).

It belongs to the universal ribosomal protein uL11 family. As to quaternary structure, part of the ribosomal stalk of the 50S ribosomal subunit. Interacts with L10 and the large rRNA to form the base of the stalk. L10 forms an elongated spine to which L12 dimers bind in a sequential fashion forming a multimeric L10(L12)X complex. One or more lysine residues are methylated.

Its function is as follows. Forms part of the ribosomal stalk which helps the ribosome interact with GTP-bound translation factors. This Pseudoalteromonas atlantica (strain T6c / ATCC BAA-1087) protein is Large ribosomal subunit protein uL11.